The sequence spans 1477 residues: FHA domain-containing protein PS1 (1477 aa).

In terms of domain architecture, FHA spans 64 to 115; that stretch reads LVVGRHPDCDILLTHPSISRFHLEIRSISSRQKLFVTDLSSVHGTWVRDLRI. 7 disordered regions span residues 188–218, 588–644, 789–818, 832–911, 942–979, 1004–1030, and 1159–1225; these read ENTTSGDEGVLHLDVTSEGTGSSVPSEDEDT, LGKA…PKSF, PNSFSKAEPTLETEDSRQQARGLVGSDSEF, LNQK…LIGS, ALAAKTSEDTKLIEELSSSDSGSQENQTPETHAVRDDV, IRTNKSQGKQKQTGRQPKDKLHRKQAL, and VEQE…IRSS. Residues 589-607 are compositionally biased toward basic and acidic residues; it reads GKADIRSHEENGESEDSRQ. Residues 832 to 849 show a composition bias toward polar residues; it reads LNQKRNGETKVSSRQASP. The span at 870–883 shows a compositional bias: low complexity; that stretch reads QSLCSSSQPPSESE. Polar residues-rich tracts occupy residues 885–897, 957–971, 1007–1018, and 1198–1212; these read NPATDQDQESGII, LSSSDSGSQENQTPE, NKSQGKQKQTGR, and SSFQSQSYTEASSTA. The span at 1213–1225 shows a compositional bias: low complexity; the sequence is SARNNISRGIRSS.

Functionally, required for normal spindle orientation at male meiosis II and normal formation of tetrad of microspores. Not involved in female meiosis. This Arabidopsis thaliana (Mouse-ear cress) protein is FHA domain-containing protein PS1.